The chain runs to 245 residues: tRNA pseudouridine synthase A (245 aa).

The active-site Nucleophile is the Asp-52. Tyr-110 is a binding site for substrate.

Belongs to the tRNA pseudouridine synthase TruA family. As to quaternary structure, homodimer.

It carries out the reaction uridine(38/39/40) in tRNA = pseudouridine(38/39/40) in tRNA. Its function is as follows. Formation of pseudouridine at positions 38, 39 and 40 in the anticodon stem and loop of transfer RNAs. This is tRNA pseudouridine synthase A from Borrelia turicatae (strain 91E135).